We begin with the raw amino-acid sequence, 335 residues long: NmrA-like family domain-containing oxidoreductase hkm9 (335 aa).

Residues 12-17 (GATGNQ), 38-42 (RNPNS), 59-60 (DG), 80-82 (INS), Lys-137, and 161-164 (YLEN) contribute to the NADP(+) site.

Belongs to the NmrA-type oxidoreductase family.

Its pathway is secondary metabolite biosynthesis. NmrA-like family domain-containing oxidoreductase; part of the gene cluster that mediates the biosynthesis of hancockiamides, an unusual new family of N-cinnamoylated piperazines. The NRPS hkm10 and the NmrA-like reductase hkm9 are proposed to convert two molecules of L-Phe to the intermediary piperazine called xenocockiamide A. Xenocockiamide A is then converted to hancockiamide D via a series of hydroxylations and O-methylations. The tyrosinase hkm6 may catalyze an aromatic hydroxylation, then the 2-oxoglutarate-dependent Fe(II) dioxygenase hkm4 and the FAD-dependent phenol hydroxylase hkm7 may catalyze consecutive hydroxylations to install 2 more hydroxy groups, and the methyltransferase hkm8 probably catalyzes two methylations using 2 molecules of S-adenosyl-L-methionine (SAM). The NRPS hkm11 activates and transfers trans-cinnamate supplied by the PAL hkm12 to hancockiamide D and produces hancockiamide A. NRPS Hkm11 has the flexibility to tolerate the bulky hancockiamide G as a substrate and the absence of the acetyl-transferase hkm3 opens up the opportunity for hkm11 to introduce a second N-cinnamoyl moiety. The cytochrome P450 monooxygenase hkm5 catalyzes the methylenedioxy bridge formation, converting hancockiamide A into hancockiamide G. Hkm5 can also convert hancockiamide B into hancockiamide C, and hancockiamide D into hancockiamide H. The N-acetyltransferase hkm3 finally transfers an acetyl group to 1-N of piperazine, converting hancockiamide A into hancockiamide B and hancockiamide G into hancockiamide C. The polypeptide is NmrA-like family domain-containing oxidoreductase hkm9 (Aspergillus hancockii).